Reading from the N-terminus, the 238-residue chain is Ribosomal RNA small subunit methyltransferase I (238 aa).

The protein belongs to the methyltransferase superfamily. RsmI family.

It is found in the cytoplasm. It carries out the reaction cytidine(1402) in 16S rRNA + S-adenosyl-L-methionine = 2'-O-methylcytidine(1402) in 16S rRNA + S-adenosyl-L-homocysteine + H(+). Catalyzes the 2'-O-methylation of the ribose of cytidine 1402 (C1402) in 16S rRNA. This is Ribosomal RNA small subunit methyltransferase I from Mesomycoplasma conjunctivae (strain ATCC 25834 / NCTC 10147 / HRC/581) (Mycoplasma conjunctivae).